Here is a 173-residue protein sequence, read N- to C-terminus: Endosomal/vacuolar adapter protein YPT35 (173 aa).

The PX domain occupies 40-173; sequence ERAFVTNCTI…LVIQFLRPRK (134 aa).

The protein belongs to the YPT35 family.

Its subcellular location is the endosome membrane. The protein resides in the vacuole membrane. In terms of biological role, recruits the lipid transfer protein VPS13 to endosomal and vacuolar membranes. The polypeptide is Endosomal/vacuolar adapter protein YPT35 (YPT35) (Candida glabrata (strain ATCC 2001 / BCRC 20586 / JCM 3761 / NBRC 0622 / NRRL Y-65 / CBS 138) (Yeast)).